The sequence spans 1024 residues: Probable alpha-mannosidase At5g13980 (1024 aa).

The signal sequence occupies residues M1–S21. A glycan (N-linked (GlcNAc...) asparagine) is linked at N27. Residues H46 and D48 each contribute to the Zn(2+) site. The N-linked (GlcNAc...) asparagine glycan is linked to N63. Zn(2+) is bound at residue D168. A glycan (N-linked (GlcNAc...) asparagine) is linked at N278. Zn(2+) is bound at residue H410. C461 and C469 are joined by a disulfide. N-linked (GlcNAc...) asparagine glycans are attached at residues N465, N475, N637, N658, N733, and N823. C827 and C832 are joined by a disulfide.

Belongs to the glycosyl hydrolase 38 family. As to quaternary structure, homodimer. Requires Zn(2+) as cofactor.

It catalyses the reaction Hydrolysis of terminal, non-reducing alpha-D-mannose residues in alpha-D-mannosides.. In terms of biological role, liberates mannose from p-nitrophenyl-alpha-D-mannoside in vitro. The polypeptide is Probable alpha-mannosidase At5g13980 (Arabidopsis thaliana (Mouse-ear cress)).